A 260-amino-acid chain; its full sequence is Dolichol-phosphate mannosyltransferase subunit 1 (260 aa).

A2 bears the N-acetylalanine mark. A phosphoserine mark is found at S3 and S9. Residues P32, Y34, E36, I63, D65, D118, A119, D120, R147, R234, and K240 each contribute to the GDP-alpha-D-mannose site. D120 is a binding site for Mg(2+). D120 lines the Mn(2+) pocket.

The protein belongs to the glycosyltransferase 2 family. Component of the dolichol-phosphate mannose (DPM) synthase complex composed of DPM1, DPM2 and DPM3; within the complex, directly interacts with DPM3. This interaction stabilizes DPM1. The cofactor is Mg(2+). Mn(2+) is required as a cofactor. It depends on Ca(2+) as a cofactor.

It localises to the endoplasmic reticulum. It carries out the reaction a di-trans,poly-cis-dolichyl phosphate + GDP-alpha-D-mannose = a di-trans,poly-cis-dolichyl beta-D-mannosyl phosphate + GDP. It participates in protein modification; protein glycosylation. In terms of biological role, transfers mannose from GDP-mannose to dolichol monophosphate to form dolichol phosphate mannose (Dol-P-Man) which is the mannosyl donor in pathways leading to N-glycosylation, glycosyl phosphatidylinositol membrane anchoring, and O-mannosylation of proteins; catalytic subunit of the dolichol-phosphate mannose (DPM) synthase complex. This chain is Dolichol-phosphate mannosyltransferase subunit 1 (DPM1), found in Homo sapiens (Human).